Consider the following 407-residue polypeptide: Putative serine/threonine-protein kinase C01C4.3 (407 aa).

Residues 33–57 (NQLQNHPPRNATQSPQRQPRTSESS) are compositionally biased toward polar residues. The disordered stretch occupies residues 33–68 (NQLQNHPPRNATQSPQRQPRTSESSMDFPRSALRRN). Residues 126–397 (YTVNKQLGTG…RKCLAKEKLL (272 aa)) form the Protein kinase domain. ATP is bound by residues 132–140 (LGTGRFGFI) and K155. N251 acts as the Proton acceptor in catalysis.

Belongs to the protein kinase superfamily. Ser/Thr protein kinase family.

It catalyses the reaction L-seryl-[protein] + ATP = O-phospho-L-seryl-[protein] + ADP + H(+). It carries out the reaction L-threonyl-[protein] + ATP = O-phospho-L-threonyl-[protein] + ADP + H(+). In Caenorhabditis elegans, this protein is Putative serine/threonine-protein kinase C01C4.3.